The sequence spans 341 residues: Long-chain acyl-[acyl-carrier-protein] reductase (341 aa).

It belongs to the short-chain dehydrogenases/reductases (SDR) family. The cofactor is a divalent metal cation.

It catalyses the reaction a long-chain fatty aldehyde + holo-[ACP] + NADP(+) = a long-chain fatty acyl-[ACP] + NADPH + H(+). It carries out the reaction a long-chain fatty aldehyde + holo-[ACP] + NAD(+) = a long-chain fatty acyl-[ACP] + NADH + H(+). Its function is as follows. Catalyzes the NADP-dependent reduction of long-chain acyl-ACP to the corresponding fatty aldehyde. Involved in the biosynthesis of alkanes, mainly heptadecane and pentadecane, by producing the fatty aldehydes used by aldehyde decarbonylase. This Synechococcus elongatus (strain ATCC 33912 / PCC 7942 / FACHB-805) (Anacystis nidulans R2) protein is Long-chain acyl-[acyl-carrier-protein] reductase.